Here is a 156-residue protein sequence, read N- to C-terminus: Small ribosomal subunit protein uS7 (156 aa).

This sequence belongs to the universal ribosomal protein uS7 family. As to quaternary structure, part of the 30S ribosomal subunit. Contacts proteins S9 and S11.

Its function is as follows. One of the primary rRNA binding proteins, it binds directly to 16S rRNA where it nucleates assembly of the head domain of the 30S subunit. Is located at the subunit interface close to the decoding center, probably blocks exit of the E-site tRNA. This chain is Small ribosomal subunit protein uS7, found in Streptococcus gordonii (strain Challis / ATCC 35105 / BCRC 15272 / CH1 / DL1 / V288).